The sequence spans 157 residues: Putative gamma-glutamylcyclotransferase CG2811 (157 aa).

Tyrosine 14 to leucine 17 contributes to the substrate binding site. Glutamate 89 acts as the Proton acceptor in catalysis.

Belongs to the gamma-glutamylcyclotransferase family.

Its function is as follows. Putative gamma-glutamylcyclotransferase. This is Putative gamma-glutamylcyclotransferase CG2811 from Drosophila melanogaster (Fruit fly).